We begin with the raw amino-acid sequence, 122 residues long: Large ribosomal subunit protein uL14 (122 aa).

Belongs to the universal ribosomal protein uL14 family. Part of the 50S ribosomal subunit. Forms a cluster with proteins L3 and L19. In the 70S ribosome, L14 and L19 interact and together make contacts with the 16S rRNA in bridges B5 and B8.

Functionally, binds to 23S rRNA. Forms part of two intersubunit bridges in the 70S ribosome. This is Large ribosomal subunit protein uL14 from Trichlorobacter lovleyi (strain ATCC BAA-1151 / DSM 17278 / SZ) (Geobacter lovleyi).